Reading from the N-terminus, the 121-residue chain is Small ribosomal subunit protein uS13 (121 aa).

Positions 88 to 121 (GMRHRRGLPVRGQHTKNNARTRKGKAVAIANKKK) are disordered.

Belongs to the universal ribosomal protein uS13 family. Part of the 30S ribosomal subunit. Forms a loose heterodimer with protein S19. Forms two bridges to the 50S subunit in the 70S ribosome.

Functionally, located at the top of the head of the 30S subunit, it contacts several helices of the 16S rRNA. In the 70S ribosome it contacts the 23S rRNA (bridge B1a) and protein L5 of the 50S subunit (bridge B1b), connecting the 2 subunits; these bridges are implicated in subunit movement. Contacts the tRNAs in the A and P-sites. The chain is Small ribosomal subunit protein uS13 from Limosilactobacillus reuteri subsp. reuteri (strain JCM 1112) (Lactobacillus reuteri).